The sequence spans 130 residues: Small ribosomal subunit protein uS9 (130 aa).

This sequence belongs to the universal ribosomal protein uS9 family.

This chain is Small ribosomal subunit protein uS9, found in Xanthomonas axonopodis pv. citri (strain 306).